Here is a 340-residue protein sequence, read N- to C-terminus: Phosphoribosylformylglycinamidine cyclo-ligase (340 aa).

It belongs to the AIR synthase family.

It localises to the cytoplasm. The enzyme catalyses 2-formamido-N(1)-(5-O-phospho-beta-D-ribosyl)acetamidine + ATP = 5-amino-1-(5-phospho-beta-D-ribosyl)imidazole + ADP + phosphate + H(+). Its pathway is purine metabolism; IMP biosynthesis via de novo pathway; 5-amino-1-(5-phospho-D-ribosyl)imidazole from N(2)-formyl-N(1)-(5-phospho-D-ribosyl)glycinamide: step 2/2. In Streptococcus pyogenes serotype M28 (strain MGAS6180), this protein is Phosphoribosylformylglycinamidine cyclo-ligase.